Reading from the N-terminus, the 329-residue chain is Intradiol ring-cleavage dioxygenase hqdA (329 aa).

4 residues coordinate Fe cation: Tyr-167, Tyr-201, His-225, and His-227.

This sequence belongs to the intradiol ring-cleavage dioxygenase family. As to quaternary structure, homodimer. The cofactor is Fe(3+).

The catalysed reaction is catechol + O2 = cis,cis-muconate + 2 H(+). It carries out the reaction benzene-1,2,4-triol + O2 = maleylacetate + 2 H(+). Its function is as follows. Intradiol ring-cleavage dioxygenase involved in an alternative pathway to the protocatechuic acid pathway since it is active on hydroxyquinol and catechol but not on protocatechuic acid. The polypeptide is Intradiol ring-cleavage dioxygenase hqdA (Aspergillus niger (strain ATCC MYA-4892 / CBS 513.88 / FGSC A1513)).